Reading from the N-terminus, the 387-residue chain is Glucose-1-phosphate adenylyltransferase (387 aa).

Residues Tyr-99, Gly-164, 179–180 (EK), and Ser-190 each bind alpha-D-glucose 1-phosphate.

It belongs to the bacterial/plant glucose-1-phosphate adenylyltransferase family. In terms of assembly, homotetramer.

The catalysed reaction is alpha-D-glucose 1-phosphate + ATP + H(+) = ADP-alpha-D-glucose + diphosphate. Its pathway is glycan biosynthesis; glycogen biosynthesis. Its function is as follows. Involved in the biosynthesis of ADP-glucose, a building block required for the elongation reactions to produce glycogen. Catalyzes the reaction between ATP and alpha-D-glucose 1-phosphate (G1P) to produce pyrophosphate and ADP-Glc. The sequence is that of Glucose-1-phosphate adenylyltransferase from Geobacillus stearothermophilus (Bacillus stearothermophilus).